The sequence spans 737 residues: Catalase-peroxidase (737 aa).

Positions 1–29 are disordered; that stretch reads MTDSPDATTGGCPVAHGDRLPHPTQGGAN. The segment at residues 101–227 is a cross-link (tryptophyl-tyrosyl-methioninium (Trp-Tyr) (with M-253)); it reads WHSAGTYRVS…LGATHMGLIY (127 aa). The active-site Proton acceptor is the His-102. A cross-link (tryptophyl-tyrosyl-methioninium (Tyr-Met) (with W-101)) is located at residues 227 to 253; sequence YVNPEGPEGKPDPVAAARDIRETFGRM. His-268 contributes to the heme b binding site.

It belongs to the peroxidase family. Peroxidase/catalase subfamily. In terms of assembly, homodimer or homotetramer. Heme b serves as cofactor. Post-translationally, formation of the three residue Trp-Tyr-Met cross-link is important for the catalase, but not the peroxidase activity of the enzyme.

It carries out the reaction H2O2 + AH2 = A + 2 H2O. The catalysed reaction is 2 H2O2 = O2 + 2 H2O. In terms of biological role, bifunctional enzyme with both catalase and broad-spectrum peroxidase activity. This is Catalase-peroxidase from Saccharopolyspora erythraea (strain ATCC 11635 / DSM 40517 / JCM 4748 / NBRC 13426 / NCIMB 8594 / NRRL 2338).